Reading from the N-terminus, the 1744-residue chain is Transcription initiation factor TFIID subunit 1 (1744 aa).

6 disordered regions span residues 1–65, 248–275, 429–488, 1001–1024, 1071–1098, and 1186–1213; these read MNNT…EKNE, VSIRSGKPLNYRTPDDLPSTSSGPAPNS, PEDR…DNDP, QNQTLANTDPISTDDDSTDADSDN, TTNQVEKGEKKEEGEVTAEEKKSASQFG, and MKKNEEKAAHKVQKMTEKKVKPIKPPNP. Polar residues predominate over residues 43 to 52; that stretch reads ACSSASNGGS. Residues 55 to 64 show a composition bias toward basic and acidic residues; sequence VKMEPKVEKN. Basic and acidic residues predominate over residues 429 to 439; the sequence is PEDRRHDEGPD. The span at 440 to 449 shows a compositional bias: basic residues; the sequence is HHHHHHHHRK. Positions 477–488 are enriched in polar residues; the sequence is ESTMAQFTDNDP. Residues 1012–1024 are compositionally biased toward acidic residues; it reads STDDDSTDADSDN. Coiled coils occupy residues 1019-1080, 1161-1204, and 1282-1314; these read DADS…KGEK, YAQM…TEKK, and NFAEIRKEQNREEKLKRKLAKMAEAAVRERQMA. Basic and acidic residues-rich tracts occupy residues 1076–1093 and 1186–1205; these read EKGEKKEEGEVTAEEKKS and MKKNEEKAAHKVQKMTEKKV. The segment covering 1319-1344 has biased composition (gly residues); it reads YGGGASSSGGAGGGGSGIGGSTGGGI. A disordered region spans residues 1319–1391; sequence YGGGASSSGG…SKRRSSMMPE (73 aa). A compositionally biased stretch (polar residues) spans 1354–1363; it reads SQISGTSSFL. The segment covering 1372–1381 has biased composition (low complexity); it reads GGNRNSSVSG. The Nuclear localization signal motif lies at 1379 to 1386; that stretch reads VSGSKRRS. Bromo domains lie at 1404 to 1512 and 1537 to 1634; these read RARA…MIER and YLLG…VKDQ. Acidic residues predominate over residues 1666-1694; it reads DHMDEMEDHPTEEEEEDDDDEIMDDDMDI. Disordered stretches follow at residues 1666-1702 and 1714-1744; these read DHMDEMEDHPTEEEEEDDDDEIMDDDMDIDATGYSYD and NDLAMSDSDEDERAEDVKRPANGDDNLLDSF.

This sequence belongs to the TAF1 family. As to quaternary structure, component of the TFIID basal transcription factor complex, composed of TATA-box-binding protein tbp-1, and a number of TBP-associated factors (TAFs).

The protein resides in the nucleus. The TFIID basal transcription factor complex plays a major role in the initiation of RNA polymerase II (Pol II)-dependent transcription. TFIID recognizes and binds promoters via its subunit tbp-1, a TATA-box-binding protein, and promotes assembly of the pre-initiation complex (PIC). The TFIID complex consists of tbp-1 and TBP-associated factors (TAFs), including taf-1. May regulate RNA polymerase II activity and thereby may control transcription initiation by RNA polymerase II. Required for early embryonic development. Essential for embryonic transcription of several genes. The polypeptide is Transcription initiation factor TFIID subunit 1 (Caenorhabditis elegans).